The primary structure comprises 231 residues: MRFHIMTLFPEIFNSYMDESIMKRAVEKGIIEVHIYNIRDFSNNKHKKVDDYPFGGGAGMVMTPQPIYDTYKHIITTHNINNPSVIYLTPKGKVYNQSMAKQMSLKEDIILLCGHYEGIDERIIDLIVTDEISIGDYVLTGGELPALIMIDSISRLIPGVLNQEESFEEESFKDNLLEYPHYTRPRDFEGLKVPEVLLSGNHKKIDEWRREESIRITKERRFDLYKKSNEK.

S-adenosyl-L-methionine-binding positions include glycine 114 and isoleucine 134 to leucine 139.

It belongs to the RNA methyltransferase TrmD family. Homodimer.

The protein localises to the cytoplasm. The catalysed reaction is guanosine(37) in tRNA + S-adenosyl-L-methionine = N(1)-methylguanosine(37) in tRNA + S-adenosyl-L-homocysteine + H(+). In terms of biological role, specifically methylates guanosine-37 in various tRNAs. The protein is tRNA (guanine-N(1)-)-methyltransferase of Clostridioides difficile (strain 630) (Peptoclostridium difficile).